The sequence spans 328 residues: D-cysteine desulfhydrase (328 aa).

Residue Lys51 is modified to N6-(pyridoxal phosphate)lysine.

This sequence belongs to the ACC deaminase/D-cysteine desulfhydrase family. Homodimer. Pyridoxal 5'-phosphate is required as a cofactor.

It catalyses the reaction D-cysteine + H2O = hydrogen sulfide + pyruvate + NH4(+) + H(+). Catalyzes the alpha,beta-elimination reaction of D-cysteine and of several D-cysteine derivatives. It could be a defense mechanism against D-cysteine. The chain is D-cysteine desulfhydrase from Escherichia coli O9:H4 (strain HS).